The following is a 287-amino-acid chain: Isopentenyl-diphosphate Delta-isomerase 1, chloroplastic (287 aa).

The N-terminal 51 residues, Met1–Ser51, are a transit peptide targeting the chloroplast. A substrate-binding site is contributed by Lys90. Mg(2+) is bound by residues His94 and His106. Residues Leu104–Leu256 enclose the Nudix hydrolase domain. Residues Arg125 and Lys129 each contribute to the substrate site. The active site involves Cys141. Ser142 is a binding site for substrate. The short motif at Ser142–Gly172 is the Nudix box element. Residues Glu201 and Glu203 each coordinate Mg(2+). Glu203 is a catalytic residue.

It belongs to the IPP isomerase type 1 family. In terms of assembly, monomer. Requires Mg(2+) as cofactor. As to expression, mainly expressed in roots and trichomes and, to a lower extent, in leaves, flowers and stems.

The protein localises to the plastid. It localises to the chloroplast. The enzyme catalyses isopentenyl diphosphate = dimethylallyl diphosphate. The protein operates within isoprenoid biosynthesis; dimethylallyl diphosphate biosynthesis; dimethylallyl diphosphate from isopentenyl diphosphate: step 1/1. It participates in porphyrin-containing compound metabolism; chlorophyll biosynthesis. Catalyzes the 1,3-allylic rearrangement of the homoallylic substrate isopentenyl (IPP) to its highly electrophilic allylic isomer, dimethylallyl diphosphate (DMAPP). This is Isopentenyl-diphosphate Delta-isomerase 1, chloroplastic from Cannabis sativa (Hemp).